The following is a 175-amino-acid chain: Universal stress protein A-like protein (175 aa).

AMP is bound by residues Ala11, Val12, Asn13, Ser26, Cys27, Val53, Gly131, Arg133, Thr145, Val146, and Ser147.

This sequence belongs to the universal stress protein A family. As to quaternary structure, homohexamer.

This Arabidopsis thaliana (Mouse-ear cress) protein is Universal stress protein A-like protein.